The following is a 780-amino-acid chain: Aconitate hydratase, mitochondrial (780 aa).

The transit peptide at 1–27 (MAPYSLLVTRLQKALGVRQYHVASVLC) directs the protein to the mitochondrion. Lys-31 bears the N6-succinyllysine mark. N6-acetyllysine; alternate is present on Lys-50. Position 50 is an N6-succinyllysine; alternate (Lys-50). Gln-99 contributes to the substrate binding site. An N6-acetyllysine; alternate mark is found at Lys-138 and Lys-144. N6-succinyllysine; alternate is present on residues Lys-138 and Lys-144. 192–194 (DSH) is a binding site for substrate. At Lys-233 the chain carries N6-acetyllysine; alternate. Lys-233 bears the N6-succinyllysine; alternate mark. Cys-385 contacts [4Fe-4S] cluster. Lys-411 carries the N6-succinyllysine modification. [4Fe-4S] cluster contacts are provided by Cys-448 and Cys-451. Substrate contacts are provided by Arg-474 and Arg-479. Basic and acidic residues predominate over residues 528-537 (DADELPKGEF). The segment at 528–560 (DADELPKGEFDPGQDTYQHPPKDSSGQHVDVSP) is disordered. At Lys-549 the chain carries N6-succinyllysine. Residues 551-560 (SSGQHVDVSP) show a composition bias toward polar residues. Residue Ser-559 is modified to Phosphoserine. N6-acetyllysine; alternate is present on Lys-573. An N6-succinyllysine; alternate modification is found at Lys-573. N6-succinyllysine is present on residues Lys-577 and Lys-591. N6-acetyllysine; alternate is present on Lys-605. An N6-succinyllysine; alternate modification is found at Lys-605. Position 607 (Arg-607) interacts with substrate. Lys-628 is subject to N6-succinyllysine. At Ser-670 the chain carries Phosphoserine. Substrate is bound at residue 670 to 671 (SR). N6-succinyllysine is present on Lys-689. An N6-acetyllysine; alternate mark is found at Lys-723 and Lys-730. An N6-succinyllysine; alternate mark is found at Lys-723 and Lys-730. Residues Lys-736, Lys-739, and Lys-743 each carry the N6-acetyllysine modification.

It belongs to the aconitase/IPM isomerase family. Monomer. Requires [4Fe-4S] cluster as cofactor. In terms of processing, forms covalent cross-links mediated by transglutaminase TGM2, between a glutamine and the epsilon-amino group of a lysine residue, forming homopolymers and heteropolymers.

Its subcellular location is the mitochondrion. The enzyme catalyses citrate = D-threo-isocitrate. Its pathway is carbohydrate metabolism; tricarboxylic acid cycle; isocitrate from oxaloacetate: step 2/2. Functionally, catalyzes the isomerization of citrate to isocitrate via cis-aconitate. The sequence is that of Aconitate hydratase, mitochondrial (ACO2) from Homo sapiens (Human).